The chain runs to 644 residues: Exoribonuclease 2 (644 aa).

The 328-residue stretch at 189–516 (REDLTALNFV…NHRLLKAIIA (328 aa)) folds into the RNB domain. Positions 561–643 (DERFNAEIID…ETRSVIARPA (83 aa)) constitute an S1 motif domain.

It belongs to the RNR ribonuclease family. RNase II subfamily.

Its subcellular location is the cytoplasm. The enzyme catalyses Exonucleolytic cleavage in the 3'- to 5'-direction to yield nucleoside 5'-phosphates.. Its function is as follows. Involved in mRNA degradation. Hydrolyzes single-stranded polyribonucleotides processively in the 3' to 5' direction. The chain is Exoribonuclease 2 from Serratia proteamaculans (strain 568).